Here is a 128-residue protein sequence, read N- to C-terminus: MITVFGLKSKLAPRREKLAEVIYNSLHLGLDIPKGKHAIRFLCLEKEDFYYPFDRSDDYTVIEINLMAGRMEGTKKRLIKMLFSELEYKLGIRAHDVEITIKEQPAHCWGFRGMTGDEARDLDYDIYV.

This is an uncharacterized protein from Haemophilus influenzae (strain ATCC 51907 / DSM 11121 / KW20 / Rd).